A 269-amino-acid chain; its full sequence is Extracellular metalloprotease UREG_07765 (269 aa).

The N-terminal stretch at 1 to 18 is a signal peptide; the sequence is MRLSVSLLALAFGSLVAA. Residue asparagine 179 is glycosylated (N-linked (GlcNAc...) asparagine). Histidine 191 lines the Zn(2+) pocket. Glutamate 192 is a catalytic residue. Residue histidine 195 participates in Zn(2+) binding. Residues 207–227 form a disordered region; the sequence is VSDTPPQRSSTQGCPSSRDSC. The segment covering 210–225 has biased composition (polar residues); that stretch reads TPPQRSSTQGCPSSRD. An intrachain disulfide couples cysteine 220 to cysteine 246.

It belongs to the peptidase M43B family.

The protein localises to the secreted. In terms of biological role, secreted metalloproteinase that allows assimilation of proteinaceous substrates. The polypeptide is Extracellular metalloprotease UREG_07765 (Uncinocarpus reesii (strain UAMH 1704)).